Consider the following 500-residue polypeptide: Cytochrome P450 71B35 (500 aa).

Residues 1 to 21 form a helical membrane-spanning segment; sequence MAHIWLLPLIFLVCILLAVFN. Cys-439 contacts heme.

The protein belongs to the cytochrome P450 family. The cofactor is heme.

It is found in the membrane. In Arabidopsis thaliana (Mouse-ear cress), this protein is Cytochrome P450 71B35 (CYP71B35).